Reading from the N-terminus, the 265-residue chain is 4-hydroxy-tetrahydrodipicolinate reductase (265 aa).

NAD(+) contacts are provided by residues 7–12 (GASGRM) and Asp-33. Residue Arg-34 coordinates NADP(+). Residues 96–98 (GTT) and 120–123 (AANM) each bind NAD(+). The Proton donor/acceptor role is filled by His-153. Residue His-154 participates in (S)-2,3,4,5-tetrahydrodipicolinate binding. Lys-157 serves as the catalytic Proton donor. 163–164 (GT) is a (S)-2,3,4,5-tetrahydrodipicolinate binding site.

It belongs to the DapB family.

It is found in the cytoplasm. It catalyses the reaction (S)-2,3,4,5-tetrahydrodipicolinate + NAD(+) + H2O = (2S,4S)-4-hydroxy-2,3,4,5-tetrahydrodipicolinate + NADH + H(+). The enzyme catalyses (S)-2,3,4,5-tetrahydrodipicolinate + NADP(+) + H2O = (2S,4S)-4-hydroxy-2,3,4,5-tetrahydrodipicolinate + NADPH + H(+). It functions in the pathway amino-acid biosynthesis; L-lysine biosynthesis via DAP pathway; (S)-tetrahydrodipicolinate from L-aspartate: step 4/4. Its function is as follows. Catalyzes the conversion of 4-hydroxy-tetrahydrodipicolinate (HTPA) to tetrahydrodipicolinate. The polypeptide is 4-hydroxy-tetrahydrodipicolinate reductase (Burkholderia cenocepacia (strain ATCC BAA-245 / DSM 16553 / LMG 16656 / NCTC 13227 / J2315 / CF5610) (Burkholderia cepacia (strain J2315))).